Consider the following 447-residue polypeptide: Asparagine--tRNA ligase (447 aa).

The protein belongs to the class-II aminoacyl-tRNA synthetase family. Homodimer.

Its subcellular location is the cytoplasm. It catalyses the reaction tRNA(Asn) + L-asparagine + ATP = L-asparaginyl-tRNA(Asn) + AMP + diphosphate + H(+). The chain is Asparagine--tRNA ligase from Streptococcus pneumoniae serotype 4 (strain ATCC BAA-334 / TIGR4).